Consider the following 270-residue polypeptide: Oxidized low-density lipoprotein receptor 1 (270 aa).

The segment covering 1–14 has biased composition (basic and acidic residues); it reads MTVDDPKGMKDQLD. The segment at 1–22 is disordered; it reads MTVDDPKGMKDQLDQKPNGKTA. Residues 1 to 33 are Cytoplasmic-facing; that stretch reads MTVDDPKGMKDQLDQKPNGKTAKGFVSSWRWYP. Residues 34 to 56 traverse the membrane as a helical; Signal-anchor for type II membrane protein segment; it reads AAVTLGVLCLGLLVTVILLILQL. Residue C42 is the site of S-palmitoyl cysteine attachment. The tract at residues 57-146 is neck; that stretch reads SQVSDLIKKQ…SGPCPQDWLW (90 aa). The Extracellular segment spans residues 57-270; that stretch reads SQVSDLIKKQ…QKKANLLRAQ (214 aa). Residues N69 and N135 are each glycosylated (N-linked (GlcNAc...) asparagine). Positions 85-135 form a coiled coil; that stretch reads RRSEKSAQESQKELKEMIETLAHKLDEKSKKLMELHRQNLNLQEVLKEAAN. 3 disulfides stabilise this stretch: C140–C151, C168–C260, and C239–C252. The C-type lectin domain occupies 147–261; it reads HEENCYQFSS…CILTAFSICQ (115 aa).

In terms of assembly, homodimer; disulfide-linked. May form a hexamer composed of 3 homodimers. Interacts with HSP70. N-glycosylated. In terms of tissue distribution, highly expressed in endothelial cells, aortic intima and lung. Expressed at low level in other tissues.

Its subcellular location is the cell membrane. The protein localises to the membrane raft. The protein resides in the secreted. Functionally, receptor that mediates the recognition, internalization and degradation of oxidatively modified low density lipoprotein (oxLDL) by vascular endothelial cells. OxLDL is a marker of atherosclerosis that induces vascular endothelial cell activation and dysfunction, resulting in pro-inflammatory responses, pro-oxidative conditions and apoptosis. Its association with oxLDL induces the activation of NF-kappa-B through an increased production of intracellular reactive oxygen and a variety of pro-atherogenic cellular responses including a reduction of nitric oxide (NO) release, monocyte adhesion and apoptosis. In addition to binding oxLDL, it acts as a receptor for the HSP70 protein involved in antigen cross-presentation to naive T-cells in dendritic cells, thereby participating in cell-mediated antigen cross-presentation. Also involved in inflammatory process, by acting as a leukocyte-adhesion molecule at the vascular interface in endotoxin-induced inflammation. Also acts as a receptor for advanced glycation end (AGE) products, activated platelets, monocytes, apoptotic cells and both Gram-negative and Gram-positive bacteria. This chain is Oxidized low-density lipoprotein receptor 1 (OLR1), found in Bos taurus (Bovine).